The sequence spans 419 residues: Inward rectifier potassium channel 16 (419 aa).

Residues 1–67 (MSYYGSSYRI…MVDIFTTLVD (67 aa)) lie on the Cytoplasmic side of the membrane. The helical transmembrane segment at 68 to 94 (TKWRHMFVIFSLSYILSWLIFGSIFWL) threads the bilayer. At 95 to 117 (IAFHHGDLLSDPDITPCVDNVHS) the chain is on the extracellular side. The helical; Pore-forming intramembrane region spans 118–134 (FTAAFLFSLETQTTIGY). A Selectivity filter motif is present at residues 131-136 (TIGYGY). The Extracellular portion of the chain corresponds to 135-143 (GYRCVTEEC). A helical transmembrane segment spans residues 144 to 171 (SVAVLTVILQSILSCIINTFIIGAALAK). Topologically, residues 172 to 419 (MATARKRAQT…LNRISMESQM (248 aa)) are cytoplasmic. A phosphoserine mark is found at Ser358, Ser374, and Ser376.

It belongs to the inward rectifier-type potassium channel (TC 1.A.2.1) family. KCNJ16 subfamily. It forms heteromeric channels with Kir4.1/KCNJ10; this interaction is required for KCNJ16 localization to the basolateral membrane in kidney cells. As a heteromer with KCNJ10, may interact with MAGI1; this interaction may facilitate KCNJ10/KCNJ16 potassium channel expression at the basolateral membrane in kidney cells. May form heteromers with Kir2.1/KCNJ2. Can form heteromeric channels with Kir4.2/KCNJ15. Abundantly expressed in the proximal and distal segments of the nephron.

The protein resides in the membrane. It is found in the basolateral cell membrane. The catalysed reaction is K(+)(in) = K(+)(out). With respect to regulation, channel activity is strongly regulated by variations of cytosolic pH; channels are activated by alkaline and inhibited by acidic pH values. Activated by phosphatidylinositol 4,5 biphosphate (PtdIns(4,5)P2). In terms of biological role, inward rectifier potassium channels are characterized by a greater tendency to allow potassium to flow into the cell rather than out of it. Their voltage dependence is regulated by the concentration of extracellular potassium; as external potassium is raised, the voltage range of the channel opening shifts to more positive voltages. The inward rectification is mainly due to the blockage of outward current by internal magnesium. KCNJ16 may be involved in the regulation of fluid and pH balance. In the kidney, together with KCNJ10, mediates basolateral K(+) recycling in distal tubules; this process is critical for Na(+) reabsorption at the tubules. The chain is Inward rectifier potassium channel 16 (Kcnj16) from Mus musculus (Mouse).